Here is a 560-residue protein sequence, read N- to C-terminus: Serine palmitoyltransferase 2 (560 aa).

A helical transmembrane segment spans residues 65–85 (PMLVAVLTYVGYGVLTLFGYL). Lys377 is modified (N6-(pyridoxal phosphate)lysine).

This sequence belongs to the class-II pyridoxal-phosphate-dependent aminotransferase family. In terms of assembly, component of the serine palmitoyltransferase (SPT) complex, which is composed of SPTLC1, SPTLC2 or SPTLC3 and SPTSSA or SPTSSB. The heterodimer consisting of SPTLC1 and SPTLC2/SPTLC3 forms the catalytic core of the enzyme, while SPTSSA or SPTSSB subunits determine substrate specificity. SPT also interacts with ORMDL proteins, especially ORMDL3, which negatively regulate SPT activity in the presence of ceramides. Forms dimers of heterodimers with SPTLC1. Pyridoxal 5'-phosphate serves as cofactor. Expressed in a variety of tissues. Expressed in brains cortices (at protein level). Expressed in brown and white adipose tissues. Expressed in liver.

It is found in the endoplasmic reticulum membrane. The catalysed reaction is L-serine + hexadecanoyl-CoA + H(+) = 3-oxosphinganine + CO2 + CoA. It carries out the reaction octadecanoyl-CoA + L-serine + H(+) = 3-oxoeicosasphinganine + CO2 + CoA. It functions in the pathway lipid metabolism; sphingolipid metabolism. Its activity is regulated as follows. SPT complex catalytic activity is negatively regulated by ORMDL proteins, including ORMDL3, in the presence of ceramides. This mechanism allows to maintain ceramide levels at sufficient concentrations for the production of complex sphingolipids, but which prevents the accumulation of ceramides to levels that trigger apoptosis. Component of the serine palmitoyltransferase multisubunit enzyme (SPT) that catalyzes the initial and rate-limiting step in sphingolipid biosynthesis by condensing L-serine and activated acyl-CoA (most commonly palmitoyl-CoA) to form long-chain bases. The SPT complex is composed of SPTLC1, SPTLC2 or SPTLC3 and SPTSSA or SPTSSB. Within this complex, the heterodimer consisting of SPTLC1 and SPTLC2/SPTLC3 forms the catalytic core. The composition of the serine palmitoyltransferase (SPT) complex determines the substrate preference. The SPTLC1-SPTLC2-SPTSSA complex shows a strong preference for C16-CoA substrate, while the SPTLC1-SPTLC3-SPTSSA isozyme uses both C14-CoA and C16-CoA as substrates, with a slight preference for C14-CoA. The SPTLC1-SPTLC2-SPTSSB complex shows a strong preference for C18-CoA substrate, while the SPTLC1-SPTLC3-SPTSSB isozyme displays an ability to use a broader range of acyl-CoAs, without apparent preference. Crucial for adipogenesis. The protein is Serine palmitoyltransferase 2 of Mus musculus (Mouse).